We begin with the raw amino-acid sequence, 753 residues long: 5-methyltetrahydropteroyltriglutamate--homocysteine methyltransferase (753 aa).

5-methyltetrahydropteroyltri-L-glutamate contacts are provided by residues 17–20 and K117; that span reads RELK. L-homocysteine is bound by residues 431-433 and E484; that span reads IGS. L-methionine contacts are provided by residues 431–433 and E484; that span reads IGS. Residues 515–516 and W561 each bind 5-methyltetrahydropteroyltri-L-glutamate; that span reads RC. D599 is an L-homocysteine binding site. D599 provides a ligand contact to L-methionine. E605 contributes to the 5-methyltetrahydropteroyltri-L-glutamate binding site. The Zn(2+) site is built by H641, C643, and E665. Residue H694 is the Proton donor of the active site. C726 contacts Zn(2+).

It belongs to the vitamin-B12 independent methionine synthase family. Requires Zn(2+) as cofactor.

The enzyme catalyses 5-methyltetrahydropteroyltri-L-glutamate + L-homocysteine = tetrahydropteroyltri-L-glutamate + L-methionine. The protein operates within amino-acid biosynthesis; L-methionine biosynthesis via de novo pathway; L-methionine from L-homocysteine (MetE route): step 1/1. In terms of biological role, catalyzes the transfer of a methyl group from 5-methyltetrahydrofolate to homocysteine resulting in methionine formation. The polypeptide is 5-methyltetrahydropteroyltriglutamate--homocysteine methyltransferase (Shigella dysenteriae serotype 1 (strain Sd197)).